The primary structure comprises 434 residues: Homogentisate 1,2-dioxygenase (434 aa).

His289 functions as the Proton acceptor in the catalytic mechanism. Fe cation is bound by residues His332 and Glu338. Tyr347 and His368 together coordinate homogentisate. His368 contacts Fe cation.

This sequence belongs to the homogentisate dioxygenase family. Hexamer; dimer of trimers. Requires Fe cation as cofactor.

It catalyses the reaction homogentisate + O2 = 4-maleylacetoacetate + H(+). It participates in amino-acid degradation; L-phenylalanine degradation; acetoacetate and fumarate from L-phenylalanine: step 4/6. Functionally, involved in the catabolism of homogentisate (2,5-dihydroxyphenylacetate or 2,5-OH-PhAc), a central intermediate in the degradation of phenylalanine and tyrosine. Catalyzes the oxidative ring cleavage of the aromatic ring of homogentisate to yield maleylacetoacetate. This is Homogentisate 1,2-dioxygenase from Pseudomonas fluorescens (strain ATCC BAA-477 / NRRL B-23932 / Pf-5).